Here is a 217-residue protein sequence, read N- to C-terminus: MAVIGEKFPDVELLTTHGKLKLPEHFIEAGKWFVLFSHPGDFTPVCTTEFVAFQKRYDQFRELNTELIGLSIDQVFSHIKWVEWIKEKLDVDIEFPIIADERGDLAVKLGMISPFKGSNTVRAVFVVDATGTIRAIIYYPQEVGRNMDEVVRLVKALQTADKGYATPADWPNNELLKEKVIIPPAKDMKTRAERLEACKRGDISGYDWWFCYTNLKE.

The Thioredoxin domain occupies 2-159 (AVIGEKFPDV…VVRLVKALQT (158 aa)). Cys-46 serves as the catalytic Cysteine sulfenic acid (-SOH) intermediate. Arg-122 contacts substrate.

It belongs to the peroxiredoxin family. Prx6 subfamily. In terms of assembly, homodecamer. Pentamer of dimers that assemble into a ring structure.

The protein resides in the cytoplasm. It carries out the reaction a hydroperoxide + [thioredoxin]-dithiol = an alcohol + [thioredoxin]-disulfide + H2O. Thiol-specific peroxidase that catalyzes the reduction of hydrogen peroxide and organic hydroperoxides to water and alcohols, respectively. Plays a role in cell protection against oxidative stress by detoxifying peroxides. The chain is Peroxiredoxin from Methanococcus vannielii (strain ATCC 35089 / DSM 1224 / JCM 13029 / OCM 148 / SB).